The primary structure comprises 142 residues: MKTFSAKSHEVVHEWFVIDATDKVLGRVASEVALRLRGKHKPEYTPHVDTGDFIVVINSSKLRVTGTKGLNKIYYRHSGYPGGISSTNFDKMQDRFPGRALEKAVKGMLPKGPLGYAMIKKLKVYGDANHPHAAQQPKALEI.

This sequence belongs to the universal ribosomal protein uL13 family. As to quaternary structure, part of the 50S ribosomal subunit.

This protein is one of the early assembly proteins of the 50S ribosomal subunit, although it is not seen to bind rRNA by itself. It is important during the early stages of 50S assembly. In Polynucleobacter asymbioticus (strain DSM 18221 / CIP 109841 / QLW-P1DMWA-1) (Polynucleobacter necessarius subsp. asymbioticus), this protein is Large ribosomal subunit protein uL13.